Reading from the N-terminus, the 268-residue chain is Protein MSS18 (268 aa).

This sequence to baculovirus occlusion-derived virus envelope protein E27 (ODV-E27).

It localises to the mitochondrion. In terms of biological role, involved in splicing of intron aI5-beta of the mitochondrial COX1 transcript. The protein is Protein MSS18 (MSS18) of Saccharomyces cerevisiae (strain ATCC 204508 / S288c) (Baker's yeast).